The sequence spans 89 residues: Small ribosomal subunit protein uS15 (89 aa).

Belongs to the universal ribosomal protein uS15 family. In terms of assembly, part of the 30S ribosomal subunit. Forms a bridge to the 50S subunit in the 70S ribosome, contacting the 23S rRNA.

Its function is as follows. One of the primary rRNA binding proteins, it binds directly to 16S rRNA where it helps nucleate assembly of the platform of the 30S subunit by binding and bridging several RNA helices of the 16S rRNA. Functionally, forms an intersubunit bridge (bridge B4) with the 23S rRNA of the 50S subunit in the ribosome. The sequence is that of Small ribosomal subunit protein uS15 from Rhizobium etli (strain CIAT 652).